Reading from the N-terminus, the 76-residue chain is RLSVLRYYRRPDLRILPQETFEDTCRLPSDRGRCKASFERWYFNGRTCAKFIYGGCGGNGNKFPTQEACMKRCGKA.

A signal peptide spans 1–21; that stretch reads RLSVLRYYRRPDLRILPQETF. Positions 25–73 constitute a BPTI/Kunitz inhibitor domain; it reads CRLPSDRGRCKASFERWYFNGRTCAKFIYGGCGGNGNKFPTQEACMKRC. 3 cysteine pairs are disulfide-bonded: Cys-25-Cys-73, Cys-34-Cys-56, and Cys-48-Cys-69.

It belongs to the venom Kunitz-type family. 02 (native) subfamily. Expressed by the venom gland.

Its subcellular location is the secreted. Serine protease inhibitor that inhibits trypsin at a molar ratio of 1:1. The polypeptide is Kunitz-type serine protease inhibitor HNTX-03141017 (Cyriopagopus hainanus (Chinese bird spider)).